Consider the following 428-residue polypeptide: MTNRTAYFYDPDVGNFHYGAGHPMKPHRLSLTHSLVLHYGLYKKMMVFKPYKASQHDMCRFHSEDYIDFLQKVSPNNMQGFTKSLNTFNVGGDCPVFPGLFEFCSRYTGASLQGATQLNHKICDIAINWAGGLHHAKKFEASGFCYVNDIVISILELLKYHPRVLYIDIDIHHGDGVQEAFYLTDRVMTVSFHKYGNYFFPGTGDMYEVGAESGRYYCLNVPLRDGIDDQSYRQLFQPVIKQVVDFYQPTCIVLQCGADSLGCDRLGCFNLSIRGHGECVEFVKGFKIPLLVLGGGGYTVRNVARCWTFETSLLVEESISDELPYSEYFEYFAPDFTLHPDVSTRIENQNSRQYLEQIRQTVFENLKMLNHAPSVQIRDVPSDLLSYERPDEADPEERGSEENFSRPEAANEFYDGDHDHDKESDVEI.

Positions 3-316 (NRTAYFYDPD…WTFETSLLVE (314 aa)) are histone deacetylase. Positions 17, 21, and 25 each coordinate 1D-myo-inositol 1,4,5,6-tetrakisphosphate. Histidine 135 is an active-site residue. Positions 170, 172, and 259 each coordinate Zn(2+). Residue arginine 265 coordinates 1D-myo-inositol 1,4,5,6-tetrakisphosphate. A disordered region spans residues 381 to 428 (PSDLLSYERPDEADPEERGSEENFSRPEAANEFYDGDHDHDKESDVEI). Composition is skewed to basic and acidic residues over residues 386–405 (SYER…ENFS) and 415–428 (DGDH…DVEI).

Belongs to the histone deacetylase family. HD type 1 subfamily.

It localises to the nucleus. Its subcellular location is the chromosome. It is found in the cytoplasm. The protein resides in the cytosol. It catalyses the reaction N(6)-acetyl-L-lysyl-[histone] + H2O = L-lysyl-[histone] + acetate. The catalysed reaction is N(6)-acetyl-L-lysyl-[protein] + H2O = L-lysyl-[protein] + acetate. It carries out the reaction N(6)-(2E)-butenoyl-L-lysyl-[protein] + H2O = (2E)-2-butenoate + L-lysyl-[protein]. The enzyme catalyses N(6)-(2-hydroxyisobutanoyl)-L-lysyl-[protein] + H2O = 2-hydroxy-2-methylpropanoate + L-lysyl-[protein]. It catalyses the reaction N(6)-[(S)-lactoyl]-L-lysyl-[protein] + H2O = (S)-lactate + L-lysyl-[protein]. With respect to regulation, inositol tetraphosphate (1D-myo-inositol 1,4,5,6-tetrakisphosphate) promotes the histone deacetylase activity by acting as an intermolecular glue between hdac3 and N-Cor repressor complex components. Its function is as follows. Histone deacetylase that catalyzes the deacetylation of lysine residues on the N-terminal part of the core histones (H2A, H2B, H3 and H4), and some other non-histone substrates. Histone deacetylation gives a tag for epigenetic repression and plays an important role in transcriptional regulation, cell cycle progression and developmental events. Histone deacetylases act via the formation of large multiprotein complexes, such as N-Cor repressor complex, which activate the histone deacetylase activity. Participates in the BCL6 transcriptional repressor activity by deacetylating the H3 'Lys-27' (H3K27) on enhancer elements, antagonizing EP300 acetyltransferase activity and repressing proximal gene expression. Also functions as a deacetylase for non-histone targets. In addition to protein deacetylase activity, also acts as a protein-lysine deacylase by recognizing other acyl groups: catalyzes removal of (2E)-butenoyl (crotonyl), lactoyl (lactyl) and 2-hydroxyisobutanoyl (2-hydroxyisobutyryl) acyl groups from lysine residues, leading to protein decrotonylation, delactylation and de-2-hydroxyisobutyrylation, respectively. The sequence is that of Histone deacetylase 3 (hdac3) from Danio rerio (Zebrafish).